A 122-amino-acid chain; its full sequence is Large ribosomal subunit protein uL14 (122 aa).

The protein belongs to the universal ribosomal protein uL14 family. In terms of assembly, part of the 50S ribosomal subunit. Forms a cluster with proteins L3 and L19. In the 70S ribosome, L14 and L19 interact and together make contacts with the 16S rRNA in bridges B5 and B8.

Its function is as follows. Binds to 23S rRNA. Forms part of two intersubunit bridges in the 70S ribosome. The sequence is that of Large ribosomal subunit protein uL14 from Burkholderia vietnamiensis (strain G4 / LMG 22486) (Burkholderia cepacia (strain R1808)).